Consider the following 1349-residue polypeptide: Elongator complex protein 1 (1349 aa).

A phosphoserine mark is found at Ser-529, Ser-539, Ser-551, Ser-636, and Ser-828. The tract at residues 919-1349 is mediates dimerization; sequence QDVNVVYKSA…DFPKSHIVDF (431 aa). Residues Ser-1198 and Ser-1202 each carry the phosphoserine; by HRR25 modification. 2 positions are modified to phosphoserine: Ser-1205 and Ser-1209. A compositionally biased stretch (low complexity) spans 1214-1228; that stretch reads YTGKTGGTAKTGASR. The segment at 1214–1245 is disordered; that stretch reads YTGKTGGTAKTGASRRTAKNKRREERKRARGK. The segment at 1228-1246 is required for binding to tRNA; the sequence is RRTAKNKRREERKRARGKK.

Belongs to the ELP1/IKA1 family. As to quaternary structure, homodimer; dimerization promotes ELP1/IKI3 stability and elongator complex formation. Component of the elongator complex which consists of ELP1/IKI3, ELP2, ELP3, ELP4, ELP5/IKI1 and ELP6. The elongator complex is composed of two copies of the Elp123 subcomplex (composed of ELP1/IKI3, ELP2 and ELP3) and two copies of the Elp456 subcomplex (composed of ELP4, ELP5/IKI1 and ELP6). The Elp123 subcomplex forms a two-lobed scaffold, which binds the Elp456 subcomplex asymmetrically. In the complex, ELP1/IKI3 interacts with ELP2. In each lobe, ELP2 is tightly sandwiched between ELP1/IKI3 and ELP3. The Elp123 subcomplex binds tRNA through ELP1/IKI3 and ELP3 and can bind 2 tRNAs simultaneously. tRNA-binding induces conformational rearrangements which precisely position the targeted anticodon base in the active site. The Elp456 subcomplex binds tRNA and has ATPase activity. ELP1/IKI3 interacts with HRR25 and KTI12. Interacts with KTI11/DPH3. Post-translationally, phosphorylation promotes the tRNA modification function of the elongator complex.

It localises to the cytoplasm. The protein resides in the nucleus. It participates in tRNA modification; 5-methoxycarbonylmethyl-2-thiouridine-tRNA biosynthesis. Functionally, component of the elongator complex which is required for multiple tRNA modifications, including mcm5U (5-methoxycarbonylmethyl uridine), mcm5s2U (5-methoxycarbonylmethyl-2-thiouridine), and ncm5U (5-carbamoylmethyl uridine). The elongator complex catalyzes formation of carboxymethyluridine in the wobble base at position 34 in tRNAs. Functions as a gamma-toxin target (TOT); disruption of the complex confers resistance to Kluyveromyces lactis toxin zymocin (pGKL1 killer toxin). May also be involved in sensitivity to Pichia inositovora toxin. ELP1/IKI3 binds to tRNA, mediating interaction of the elongator complex with tRNA. Independently, may be involved in polarized exocytosis. This is Elongator complex protein 1 (IKI3) from Saccharomyces cerevisiae (strain ATCC 204508 / S288c) (Baker's yeast).